We begin with the raw amino-acid sequence, 436 residues long: tRNA(Ile)-lysidine synthase (436 aa).

25-30 (SGGLDS) contributes to the ATP binding site.

This sequence belongs to the tRNA(Ile)-lysidine synthase family.

The protein localises to the cytoplasm. The catalysed reaction is cytidine(34) in tRNA(Ile2) + L-lysine + ATP = lysidine(34) in tRNA(Ile2) + AMP + diphosphate + H(+). Its function is as follows. Ligates lysine onto the cytidine present at position 34 of the AUA codon-specific tRNA(Ile) that contains the anticodon CAU, in an ATP-dependent manner. Cytidine is converted to lysidine, thus changing the amino acid specificity of the tRNA from methionine to isoleucine. The protein is tRNA(Ile)-lysidine synthase of Serratia proteamaculans (strain 568).